Reading from the N-terminus, the 452-residue chain is Phosphatidate cytidylyltransferase, mitochondrial (452 aa).

The protein belongs to the TAM41 family. Mg(2+) serves as cofactor.

It localises to the mitochondrion inner membrane. The catalysed reaction is a 1,2-diacyl-sn-glycero-3-phosphate + CTP + H(+) = a CDP-1,2-diacyl-sn-glycerol + diphosphate. Its pathway is phospholipid metabolism; CDP-diacylglycerol biosynthesis; CDP-diacylglycerol from sn-glycerol 3-phosphate: step 3/3. Functionally, catalyzes the conversion of phosphatidic acid (PA) to CDP-diacylglycerol (CDP-DAG), an essential intermediate in the synthesis of phosphatidylglycerol, cardiolipin and phosphatidylinositol. The polypeptide is Phosphatidate cytidylyltransferase, mitochondrial (TAMM41) (Homo sapiens (Human)).